Here is a 233-residue protein sequence, read N- to C-terminus: Large ribosomal subunit protein uL1 (233 aa).

Belongs to the universal ribosomal protein uL1 family. Part of the 50S ribosomal subunit.

In terms of biological role, binds directly to 23S rRNA. The L1 stalk is quite mobile in the ribosome, and is involved in E site tRNA release. Protein L1 is also a translational repressor protein, it controls the translation of the L11 operon by binding to its mRNA. The chain is Large ribosomal subunit protein uL1 from Geobacillus stearothermophilus (Bacillus stearothermophilus).